A 175-amino-acid chain; its full sequence is Diacylglycerol kinase (175 aa).

Transmembrane regions (helical) follow at residues 55-75 (VAPN…YAFA) and 96-116 (LLHL…LVMI). Glutamate 118 serves as the catalytic Proton acceptor. Residue glutamate 125 coordinates a divalent metal cation. A helical membrane pass occupies residues 151-171 (VLLAAIAAVIVGGCLLLPPLL).

The protein belongs to the bacterial diacylglycerol kinase family. Mg(2+) is required as a cofactor.

The protein resides in the cell membrane. The catalysed reaction is a 1,2-diacyl-sn-glycerol + ATP = a 1,2-diacyl-sn-glycero-3-phosphate + ADP + H(+). Its function is as follows. Catalyzes the ATP-dependent phosphorylation of sn-l,2-diacylglycerol (DAG) to phosphatidic acid. The polypeptide is Diacylglycerol kinase (dgkA) (Synechocystis sp. (strain ATCC 27184 / PCC 6803 / Kazusa)).